We begin with the raw amino-acid sequence, 487 residues long: Aspartyl/glutamyl-tRNA(Asn/Gln) amidotransferase subunit B (487 aa).

This sequence belongs to the GatB/GatE family. GatB subfamily. Heterotrimer of A, B and C subunits.

The enzyme catalyses L-glutamyl-tRNA(Gln) + L-glutamine + ATP + H2O = L-glutaminyl-tRNA(Gln) + L-glutamate + ADP + phosphate + H(+). The catalysed reaction is L-aspartyl-tRNA(Asn) + L-glutamine + ATP + H2O = L-asparaginyl-tRNA(Asn) + L-glutamate + ADP + phosphate + 2 H(+). In terms of biological role, allows the formation of correctly charged Asn-tRNA(Asn) or Gln-tRNA(Gln) through the transamidation of misacylated Asp-tRNA(Asn) or Glu-tRNA(Gln) in organisms which lack either or both of asparaginyl-tRNA or glutaminyl-tRNA synthetases. The reaction takes place in the presence of glutamine and ATP through an activated phospho-Asp-tRNA(Asn) or phospho-Glu-tRNA(Gln). This Leptospira biflexa serovar Patoc (strain Patoc 1 / Ames) protein is Aspartyl/glutamyl-tRNA(Asn/Gln) amidotransferase subunit B.